The following is an 820-amino-acid chain: Leucine--tRNA ligase (820 aa).

Positions 40 to 51 (PYPSGAGLHVGH) match the 'HIGH' region motif. The 'KMSKS' region motif lies at 601–605 (KMSKS). Lysine 604 contributes to the ATP binding site.

This sequence belongs to the class-I aminoacyl-tRNA synthetase family.

Its subcellular location is the cytoplasm. The catalysed reaction is tRNA(Leu) + L-leucine + ATP = L-leucyl-tRNA(Leu) + AMP + diphosphate. This chain is Leucine--tRNA ligase, found in Chlamydia caviae (strain ATCC VR-813 / DSM 19441 / 03DC25 / GPIC) (Chlamydophila caviae).